The sequence spans 377 residues: DAR GTPase 2, mitochondrial (377 aa).

The transit peptide at 1 to 21 directs the protein to the mitochondrion; it reads MATAKTWKIAREIGDAVIKAS. One can recognise a CP-type G domain in the interval 34–211; it reads AAAVRAISER…VLDTPGIFPP (178 aa). The short motif at 55 to 59 is the DARXP motif element; sequence DARIP. Residues 82 to 85, 110 to 111, 150 to 155, and G207 each bind GTP; these read NKME, NS, and NVGKSA.

This sequence belongs to the TRAFAC class YlqF/YawG GTPase family. MTG1 subfamily.

It is found in the mitochondrion. GTPase that may function in mitochondrial ribosome assembly. In Arabidopsis thaliana (Mouse-ear cress), this protein is DAR GTPase 2, mitochondrial.